The primary structure comprises 254 residues: Leucyl/phenylalanyl-tRNA--protein transferase (254 aa).

This sequence belongs to the L/F-transferase family.

It localises to the cytoplasm. It carries out the reaction N-terminal L-lysyl-[protein] + L-leucyl-tRNA(Leu) = N-terminal L-leucyl-L-lysyl-[protein] + tRNA(Leu) + H(+). The enzyme catalyses N-terminal L-arginyl-[protein] + L-leucyl-tRNA(Leu) = N-terminal L-leucyl-L-arginyl-[protein] + tRNA(Leu) + H(+). The catalysed reaction is L-phenylalanyl-tRNA(Phe) + an N-terminal L-alpha-aminoacyl-[protein] = an N-terminal L-phenylalanyl-L-alpha-aminoacyl-[protein] + tRNA(Phe). Functionally, functions in the N-end rule pathway of protein degradation where it conjugates Leu, Phe and, less efficiently, Met from aminoacyl-tRNAs to the N-termini of proteins containing an N-terminal arginine or lysine. The sequence is that of Leucyl/phenylalanyl-tRNA--protein transferase from Burkholderia lata (strain ATCC 17760 / DSM 23089 / LMG 22485 / NCIMB 9086 / R18194 / 383).